Consider the following 400-residue polypeptide: Cysteine desulfurase 1 (400 aa).

Pyridoxal 5'-phosphate contacts are provided by residues 71-72 (GT), N150, Q178, and 198-200 (SGH). At K201 the chain carries N6-(pyridoxal phosphate)lysine. T236 lines the pyridoxal 5'-phosphate pocket. C324 serves as the catalytic Cysteine persulfide intermediate. C324 contacts [2Fe-2S] cluster.

The protein belongs to the class-V pyridoxal-phosphate-dependent aminotransferase family. NifS/IscS subfamily. Homodimer. Pyridoxal 5'-phosphate is required as a cofactor.

The catalysed reaction is (sulfur carrier)-H + L-cysteine = (sulfur carrier)-SH + L-alanine. Catalyzes the removal of elemental sulfur atoms from cysteine to produce alanine. Seems to participate in the biosynthesis of the nitrogenase metalloclusters by providing the inorganic sulfur required for the Fe-S core formation. The protein is Cysteine desulfurase 1 of Trichormus variabilis (strain ATCC 29413 / PCC 7937) (Anabaena variabilis).